The sequence spans 273 residues: Phosphatidylglycerol--prolipoprotein diacylglyceryl transferase (273 aa).

3 helical membrane passes run 20-40 (LAVR…LPIA), 59-79 (FLFY…VLFY), and 97-117 (GGMS…YFSW). Arg142 lines the a 1,2-diacyl-sn-glycero-3-phospho-(1'-sn-glycerol) pocket. A run of 2 helical transmembrane segments spans residues 206–226 (FGFL…FCEF) and 243–263 (MGQL…VYAM).

The protein belongs to the Lgt family.

Its subcellular location is the cell inner membrane. It carries out the reaction L-cysteinyl-[prolipoprotein] + a 1,2-diacyl-sn-glycero-3-phospho-(1'-sn-glycerol) = an S-1,2-diacyl-sn-glyceryl-L-cysteinyl-[prolipoprotein] + sn-glycerol 1-phosphate + H(+). Its pathway is protein modification; lipoprotein biosynthesis (diacylglyceryl transfer). In terms of biological role, catalyzes the transfer of the diacylglyceryl group from phosphatidylglycerol to the sulfhydryl group of the N-terminal cysteine of a prolipoprotein, the first step in the formation of mature lipoproteins. The sequence is that of Phosphatidylglycerol--prolipoprotein diacylglyceryl transferase from Gluconobacter oxydans (strain 621H) (Gluconobacter suboxydans).